Here is a 27-residue protein sequence, read N- to C-terminus: uncharacterized protein (27 aa).

The protein resides in the mitochondrion. This is an uncharacterized protein from Emericella nidulans (Aspergillus nidulans).